The sequence spans 325 residues: Biotin synthase (325 aa).

Positions 49–278 constitute a Radical SAM core domain; that stretch reads FNGNIVDLCS…KASIRLAGGR (230 aa). [4Fe-4S] cluster is bound by residues Cys-67, Cys-71, and Cys-74. Residues Ser-111, Cys-143, Cys-203, and Arg-273 each contribute to the [2Fe-2S] cluster site.

It belongs to the radical SAM superfamily. Biotin synthase family. In terms of assembly, homodimer. Requires [4Fe-4S] cluster as cofactor. The cofactor is [2Fe-2S] cluster.

It carries out the reaction (4R,5S)-dethiobiotin + (sulfur carrier)-SH + 2 reduced [2Fe-2S]-[ferredoxin] + 2 S-adenosyl-L-methionine = (sulfur carrier)-H + biotin + 2 5'-deoxyadenosine + 2 L-methionine + 2 oxidized [2Fe-2S]-[ferredoxin]. Its pathway is cofactor biosynthesis; biotin biosynthesis; biotin from 7,8-diaminononanoate: step 2/2. Its function is as follows. Catalyzes the conversion of dethiobiotin (DTB) to biotin by the insertion of a sulfur atom into dethiobiotin via a radical-based mechanism. This chain is Biotin synthase, found in Clostridium tetani (strain Massachusetts / E88).